A 142-amino-acid polypeptide reads, in one-letter code: 3-hydroxyacyl-[acyl-carrier-protein] dehydratase FabZ (142 aa).

Histidine 48 is an active-site residue.

It belongs to the thioester dehydratase family. FabZ subfamily.

It is found in the cytoplasm. It catalyses the reaction a (3R)-hydroxyacyl-[ACP] = a (2E)-enoyl-[ACP] + H2O. Involved in unsaturated fatty acids biosynthesis. Catalyzes the dehydration of short chain beta-hydroxyacyl-ACPs and long chain saturated and unsaturated beta-hydroxyacyl-ACPs. The chain is 3-hydroxyacyl-[acyl-carrier-protein] dehydratase FabZ from Desulforamulus reducens (strain ATCC BAA-1160 / DSM 100696 / MI-1) (Desulfotomaculum reducens).